A 305-amino-acid chain; its full sequence is Sulfate adenylyltransferase subunit 2 1 (305 aa).

Residues 283-305 (RSGRAIDHDQAGSMERKKREGYF) are disordered.

This sequence belongs to the PAPS reductase family. CysD subfamily. As to quaternary structure, heterodimer composed of CysD, the smaller subunit, and CysN.

It carries out the reaction sulfate + ATP + H(+) = adenosine 5'-phosphosulfate + diphosphate. It participates in sulfur metabolism; hydrogen sulfide biosynthesis; sulfite from sulfate: step 1/3. Its function is as follows. With CysN forms the ATP sulfurylase (ATPS) that catalyzes the adenylation of sulfate producing adenosine 5'-phosphosulfate (APS) and diphosphate, the first enzymatic step in sulfur assimilation pathway. APS synthesis involves the formation of a high-energy phosphoric-sulfuric acid anhydride bond driven by GTP hydrolysis by CysN coupled to ATP hydrolysis by CysD. The chain is Sulfate adenylyltransferase subunit 2 1 from Chromohalobacter salexigens (strain ATCC BAA-138 / DSM 3043 / CIP 106854 / NCIMB 13768 / 1H11).